A 257-amino-acid polypeptide reads, in one-letter code: 1-acyl-sn-glycerol-3-phosphate acyltransferase (257 aa).

The helical transmembrane segment at 10–30 (VLFYLLLSASAFVWGTLSFFI) threads the bilayer. The HXXXXD motif motif lies at 82–87 (HQSTWE). The helical transmembrane segment at 105–125 (ELLYVPFFGWALALLKPIAID) threads the bilayer.

This sequence belongs to the 1-acyl-sn-glycerol-3-phosphate acyltransferase family.

It localises to the cell inner membrane. The enzyme catalyses a 1-acyl-sn-glycero-3-phosphate + an acyl-CoA = a 1,2-diacyl-sn-glycero-3-phosphate + CoA. It participates in phospholipid metabolism; CDP-diacylglycerol biosynthesis; CDP-diacylglycerol from sn-glycerol 3-phosphate: step 2/3. Functionally, converts lysophosphatidic acid (LPA) into phosphatidic acid by incorporating acyl moiety at the 2 position. This Pseudomonas aeruginosa (strain ATCC 15692 / DSM 22644 / CIP 104116 / JCM 14847 / LMG 12228 / 1C / PRS 101 / PAO1) protein is 1-acyl-sn-glycerol-3-phosphate acyltransferase.